The following is a 734-amino-acid chain: Photosystem I P700 chlorophyll a apoprotein A2 (734 aa).

The next 8 helical transmembrane spans lie at 46 to 69 (IFAS…FHVA), 135 to 158 (LYTG…LHLQ), 175 to 199 (LNHH…HVAI), 273 to 291 (MAHH…GHMY), 330 to 353 (IHFQ…QHMY), 369 to 395 (AALY…IFFI), 417 to 439 (AIIS…LYVH), and 517 to 535 (FLVH…LILV). Cysteine 559 and cysteine 568 together coordinate [4Fe-4S] cluster. 2 helical membrane-spanning segments follow: residues 575 to 596 (AFYL…YWHW) and 643 to 665 (LSVW…MFLI). Residues histidine 654, methionine 662, and tyrosine 670 each coordinate chlorophyll a. Phylloquinone is bound at residue tryptophan 671. A helical membrane pass occupies residues 707 to 727 (LVGLAHFSVGYIFTYAAFLIA).

It belongs to the PsaA/PsaB family. As to quaternary structure, the PsaA/B heterodimer binds the P700 chlorophyll special pair and subsequent electron acceptors. PSI consists of a core antenna complex that captures photons, and an electron transfer chain that converts photonic excitation into a charge separation. The eukaryotic PSI reaction center is composed of at least 11 subunits. Requires P700 is a chlorophyll a/chlorophyll a' dimer, A0 is one or more chlorophyll a, A1 is one or both phylloquinones and FX is a shared 4Fe-4S iron-sulfur center. as cofactor.

Its subcellular location is the plastid. The protein localises to the chloroplast thylakoid membrane. It carries out the reaction reduced [plastocyanin] + hnu + oxidized [2Fe-2S]-[ferredoxin] = oxidized [plastocyanin] + reduced [2Fe-2S]-[ferredoxin]. Its function is as follows. PsaA and PsaB bind P700, the primary electron donor of photosystem I (PSI), as well as the electron acceptors A0, A1 and FX. PSI is a plastocyanin-ferredoxin oxidoreductase, converting photonic excitation into a charge separation, which transfers an electron from the donor P700 chlorophyll pair to the spectroscopically characterized acceptors A0, A1, FX, FA and FB in turn. Oxidized P700 is reduced on the lumenal side of the thylakoid membrane by plastocyanin. In Triticum aestivum (Wheat), this protein is Photosystem I P700 chlorophyll a apoprotein A2.